The following is a 318-amino-acid chain: Serpentine receptor class delta-25 (318 aa).

7 helical membrane passes run leucine 5–alanine 25, valine 38–methionine 58, histidine 88–phenylalanine 108, isoleucine 126–isoleucine 146, isoleucine 176–isoleucine 196, threonine 226–phenylalanine 246, and isoleucine 258–valine 278.

Belongs to the nematode receptor-like protein srd family.

Its subcellular location is the membrane. This chain is Serpentine receptor class delta-25 (srd-25), found in Caenorhabditis elegans.